The chain runs to 280 residues: Probable protein VP2 (280 aa).

Disordered regions lie at residues 46 to 167 (LGAG…FFTS) and 200 to 280 (AQLS…TYSN). Positions 65–81 (PEGPGGPPQHAPPNPPP) are enriched in pro residues. The span at 90-100 (RGGGAGGAGDG) shows a compositional bias: gly residues. The segment covering 106 to 117 (DAAEEYGPEDLD) has biased composition (acidic residues). Residues 227–251 (AKTRRRVKKKPLSSKNKHTKKKKRS) show a composition bias toward basic residues. The segment covering 252–266 (YSSSSPSSKDNTSES) has biased composition (low complexity).

Post-translationally, phosphorylated at C-terminal serines.

This chain is Probable protein VP2, found in Homo sapiens (Human).